Here is a 475-residue protein sequence, read N- to C-terminus: Ribulose bisphosphate carboxylase large chain (475 aa).

The propeptide occupies 1-2 (MS). Proline 3 carries the N-acetylproline modification. The residue at position 14 (lysine 14) is an N6,N6,N6-trimethyllysine. Asparagine 123 and threonine 173 together coordinate substrate. Lysine 175 acts as the Proton acceptor in catalysis. Lysine 177 serves as a coordination point for substrate. Residues lysine 201, aspartate 203, and glutamate 204 each contribute to the Mg(2+) site. Lysine 201 carries the post-translational modification N6-carboxylysine. The Proton acceptor role is filled by histidine 294. Substrate contacts are provided by arginine 295, histidine 327, and serine 379.

The protein belongs to the RuBisCO large chain family. Type I subfamily. In terms of assembly, heterohexadecamer of 8 large chains and 8 small chains; disulfide-linked. The disulfide link is formed within the large subunit homodimers. Mg(2+) serves as cofactor. In terms of processing, the disulfide bond which can form in the large chain dimeric partners within the hexadecamer appears to be associated with oxidative stress and protein turnover.

It is found in the plastid. The protein resides in the chloroplast. It carries out the reaction 2 (2R)-3-phosphoglycerate + 2 H(+) = D-ribulose 1,5-bisphosphate + CO2 + H2O. The catalysed reaction is D-ribulose 1,5-bisphosphate + O2 = 2-phosphoglycolate + (2R)-3-phosphoglycerate + 2 H(+). In terms of biological role, ruBisCO catalyzes two reactions: the carboxylation of D-ribulose 1,5-bisphosphate, the primary event in carbon dioxide fixation, as well as the oxidative fragmentation of the pentose substrate in the photorespiration process. Both reactions occur simultaneously and in competition at the same active site. The polypeptide is Ribulose bisphosphate carboxylase large chain (Zygnema circumcarinatum (Green alga)).